The chain runs to 359 residues: Peptide chain release factor 1 (359 aa).

Gln236 carries the post-translational modification N5-methylglutamine.

Belongs to the prokaryotic/mitochondrial release factor family. Post-translationally, methylated by PrmC. Methylation increases the termination efficiency of RF1.

Its subcellular location is the cytoplasm. In terms of biological role, peptide chain release factor 1 directs the termination of translation in response to the peptide chain termination codons UAG and UAA. The chain is Peptide chain release factor 1 from Streptococcus pneumoniae serotype 2 (strain D39 / NCTC 7466).